Consider the following 471-residue polypeptide: Maintenance of mitochondrial morphology protein 1 (471 aa).

Over 1-21 (MSSPQNTSCPPSQHSLSFTQG) the chain is Lumenal. A helical membrane pass occupies residues 22–42 (LLLGQLSVVLLIGAFIKFFIF). At 43–471 (GESPSSSSRG…GSLPGAPAVA (429 aa)) the chain is on the cytoplasmic side. Residues 128 to 370 (QPESLDWFNV…EPRVQLVALP (243 aa)) form the SMP-LTD domain. Disordered regions lie at residues 271–306 (GTTE…GVRS), 395–415 (EDPA…NRDG), and 448–471 (RGDT…PAVA). Residues 280–295 (PHPENQNESKPSRQDP) show a composition bias toward basic and acidic residues. Residues 401-410 (ATHSGFTPVN) show a composition bias toward polar residues.

This sequence belongs to the MMM1 family. In terms of assembly, homodimer. Component of the ER-mitochondria encounter structure (ERMES) or MDM complex, composed of MMM1, MDM10, MDM12 and MDM34. An MMM1 homodimer associates with one molecule of MDM12 on each side in a pairwise head-to-tail manner, and the SMP-LTD domains of MMM1 and MDM12 generate a continuous hydrophobic tunnel for phospholipid trafficking.

It localises to the endoplasmic reticulum membrane. Its function is as follows. Component of the ERMES/MDM complex, which serves as a molecular tether to connect the endoplasmic reticulum (ER) and mitochondria. Components of this complex are involved in the control of mitochondrial shape and protein biogenesis, and function in nonvesicular lipid trafficking between the ER and mitochondria. The MDM12-MMM1 subcomplex functions in the major beta-barrel assembly pathway that is responsible for biogenesis of all outer membrane beta-barrel proteins, and acts in a late step after the SAM complex. The MDM10-MDM12-MMM1 subcomplex further acts in the TOM40-specific pathway after the action of the MDM12-MMM1 complex. Essential for establishing and maintaining the structure of mitochondria and maintenance of mtDNA nucleoids. This is Maintenance of mitochondrial morphology protein 1 from Arthroderma otae (strain ATCC MYA-4605 / CBS 113480) (Microsporum canis).